Consider the following 512-residue polypeptide: Glutathione-binding protein GsiB (512 aa).

A signal peptide spans 1–26; sequence MTQFITHKWLAALGLASSIAAFPALA.

It belongs to the bacterial solute-binding protein 5 family. In terms of assembly, the complex is composed of two ATP-binding proteins (GsiA), two transmembrane proteins (GsiC and GsiD) and a solute-binding protein (GsiB).

Its subcellular location is the periplasm. Its function is as follows. Part of the ABC transporter complex GsiABCD involved in glutathione import. Binds glutathione. The chain is Glutathione-binding protein GsiB from Salmonella typhi.